The chain runs to 232 residues: H-2 class II histocompatibility antigen, E-S beta chain (232 aa).

The tract at residues 1–90 (WFLEYSTSEC…LDKFLVPRRV (90 aa)) is beta-1. The Extracellular portion of the chain corresponds to 1 to 193 (WFLEYSTSEC…KAQSTSAQNK (193 aa)). Disulfide bonds link Cys-10/Cys-74 and Cys-112/Cys-168. The N-linked (GlcNAc...) asparagine glycan is linked to Asn-14. The beta-2 stretch occupies residues 91–193 (EPTVTVYPTK…KAQSTSAQNK (103 aa)). Residues 92-182 (PTVTVYPTKT…PSLTDPVTVE (91 aa)) form the Ig-like C1-type domain. A helical membrane pass occupies residues 194 to 216 (MLSGVGGFVLGLLFLGAGLFIYF). The Cytoplasmic portion of the chain corresponds to 217–232 (RNQKGQSGLQPTGLLS).

This sequence belongs to the MHC class II family. Post-translationally, ubiquitinated in immature dendritic cells leading to down-regulation of MHC class II.

The protein resides in the membrane. This chain is H-2 class II histocompatibility antigen, E-S beta chain (H2-Eb1), found in Mus musculus (Mouse).